The sequence spans 79 residues: Exodeoxyribonuclease 7 small subunit (79 aa).

Belongs to the XseB family. As to quaternary structure, heterooligomer composed of large and small subunits.

It localises to the cytoplasm. The enzyme catalyses Exonucleolytic cleavage in either 5'- to 3'- or 3'- to 5'-direction to yield nucleoside 5'-phosphates.. Functionally, bidirectionally degrades single-stranded DNA into large acid-insoluble oligonucleotides, which are then degraded further into small acid-soluble oligonucleotides. This Shouchella clausii (strain KSM-K16) (Alkalihalobacillus clausii) protein is Exodeoxyribonuclease 7 small subunit.